The chain runs to 77 residues: NAD(P)H-quinone oxidoreductase subunit L (77 aa).

2 helical membrane passes run 12-32 (LIAY…LLFY) and 47-67 (LGIY…SPFL).

It belongs to the complex I NdhL subunit family. As to quaternary structure, NDH-1 can be composed of about 15 different subunits; different subcomplexes with different compositions have been identified which probably have different functions.

It localises to the cellular thylakoid membrane. The catalysed reaction is a plastoquinone + NADH + (n+1) H(+)(in) = a plastoquinol + NAD(+) + n H(+)(out). It catalyses the reaction a plastoquinone + NADPH + (n+1) H(+)(in) = a plastoquinol + NADP(+) + n H(+)(out). Its function is as follows. NDH-1 shuttles electrons from an unknown electron donor, via FMN and iron-sulfur (Fe-S) centers, to quinones in the respiratory and/or the photosynthetic chain. The immediate electron acceptor for the enzyme in this species is believed to be plastoquinone. Couples the redox reaction to proton translocation, and thus conserves the redox energy in a proton gradient. Cyanobacterial NDH-1 also plays a role in inorganic carbon-concentration. This is NAD(P)H-quinone oxidoreductase subunit L from Prochlorococcus marinus (strain MIT 9301).